The chain runs to 553 residues: Arginine--tRNA ligase (553 aa).

The 'HIGH' region motif lies at 130–140; the sequence is ANPTGDLHIGH.

The protein belongs to the class-I aminoacyl-tRNA synthetase family. As to quaternary structure, monomer.

It is found in the cytoplasm. The catalysed reaction is tRNA(Arg) + L-arginine + ATP = L-arginyl-tRNA(Arg) + AMP + diphosphate. This Staphylococcus aureus (strain bovine RF122 / ET3-1) protein is Arginine--tRNA ligase.